Consider the following 84-residue polypeptide: Small ribosomal subunit protein uS17 (84 aa).

It belongs to the universal ribosomal protein uS17 family. Part of the 30S ribosomal subunit.

In terms of biological role, one of the primary rRNA binding proteins, it binds specifically to the 5'-end of 16S ribosomal RNA. The protein is Small ribosomal subunit protein uS17 of Enterobacter sp. (strain 638).